Reading from the N-terminus, the 74-residue chain is MKKSFFEYLMTQRNPQPNNEVEEFANQAFFDQVFPKQSRDFDEISKYLELNAGYLQSMSIFDSAWQRYLESEQF.

This sequence belongs to the UPF0346 family.

This Pediococcus pentosaceus (strain ATCC 25745 / CCUG 21536 / LMG 10740 / 183-1w) protein is UPF0346 protein PEPE_1063.